Reading from the N-terminus, the 372-residue chain is GTPase Obg (372 aa).

The 159-residue stretch at Met-1–Leu-159 folds into the Obg domain. Positions Leu-128 to Gly-147 are disordered. The OBG-type G domain maps to Ala-160–Ala-334. GTP contacts are provided by residues Gly-166–Ser-173, Phe-191–Ala-195, Asp-213–Gly-216, Asn-284–Asp-287, and Ser-315–Leu-317. Mg(2+)-binding residues include Ser-173 and Thr-193.

This sequence belongs to the TRAFAC class OBG-HflX-like GTPase superfamily. OBG GTPase family. As to quaternary structure, monomer. Mg(2+) is required as a cofactor.

It is found in the cytoplasm. Its function is as follows. An essential GTPase which binds GTP, GDP and possibly (p)ppGpp with moderate affinity, with high nucleotide exchange rates and a fairly low GTP hydrolysis rate. Plays a role in control of the cell cycle, stress response, ribosome biogenesis and in those bacteria that undergo differentiation, in morphogenesis control. This Burkholderia thailandensis (strain ATCC 700388 / DSM 13276 / CCUG 48851 / CIP 106301 / E264) protein is GTPase Obg.